The primary structure comprises 446 residues: N-succinylarginine dihydrolase (446 aa).

Substrate contacts are provided by residues 19–28 (AGLSFGNVAS), N110, and 137–138 (HR). The active site involves E174. A substrate-binding site is contributed by R213. The active site involves H249. The substrate site is built by D251 and N364. C370 functions as the Nucleophile in the catalytic mechanism.

This sequence belongs to the succinylarginine dihydrolase family. Homodimer.

It carries out the reaction N(2)-succinyl-L-arginine + 2 H2O + 2 H(+) = N(2)-succinyl-L-ornithine + 2 NH4(+) + CO2. Its pathway is amino-acid degradation; L-arginine degradation via AST pathway; L-glutamate and succinate from L-arginine: step 2/5. Catalyzes the hydrolysis of N(2)-succinylarginine into N(2)-succinylornithine, ammonia and CO(2). This is N-succinylarginine dihydrolase from Burkholderia pseudomallei (strain 668).